A 443-amino-acid chain; its full sequence is MARQNRFDRTSFQTQIIDLSHDGRGVARPHGEGGKVTFVTGALPGEVVIVEPVARNRHFDEARVVEVLQASPQRVIPRCSHFGVCSGCVLQHLAEDAQVVSKQRVLLESLERIGCVSPERVLPALAAESWGYRRKGRFSVRWVEKKGRTLVGFREHDPRFVADVSVCHTVVPQVGEKIALLATLLDSLDGRCDVPQIEFIAGDAVVALTVRHLQPLSEADRLALIEFGKEHGIAIFLQSGGVESVRLLWPDEVLLAFRLKPWDVEFVFRPLDFIQINGGLNEKMIAHALDLLGAGFGERVLDLFCGLGNFTLPLARTVGEVVGVEGDIGLVERARENARRNGLGNAEFFVADLTRDQRDAPWMRQGFDKLLLDPPRSGAIEVLKQLPLKMFERIVYVSCHPGSLARDADFLVNEQGFVLRAVGAMDMFPHTAHVESIAVFDRC.

In terms of domain architecture, TRAM spans 4–66; it reads QNRFDRTSFQ…RHFDEARVVE (63 aa). Residues Cys-79, Cys-85, Cys-88, and Cys-167 each coordinate [4Fe-4S] cluster. S-adenosyl-L-methionine is bound by residues Gln-275, Phe-304, Asn-309, Glu-325, Asp-352, and Asp-373. Catalysis depends on Cys-399, which acts as the Nucleophile.

Belongs to the class I-like SAM-binding methyltransferase superfamily. RNA M5U methyltransferase family. RlmD subfamily.

The enzyme catalyses uridine(1939) in 23S rRNA + S-adenosyl-L-methionine = 5-methyluridine(1939) in 23S rRNA + S-adenosyl-L-homocysteine + H(+). Catalyzes the formation of 5-methyl-uridine at position 1939 (m5U1939) in 23S rRNA. The chain is 23S rRNA (uracil(1939)-C(5))-methyltransferase RlmD from Xylella fastidiosa (strain Temecula1 / ATCC 700964).